A 440-amino-acid polypeptide reads, in one-letter code: Protein naked cuticle homolog 1 (440 aa).

Glycine 2 carries N-myristoyl glycine lipidation. The EF-hand domain maps to 129 to 164; sequence EEDNRQEWTFTLYDFDNNGKVTREDITSLLHTIYEV. The Ca(2+) site is built by aspartate 142, aspartate 144, asparagine 146, lysine 148, and aspartate 153. The segment covering 192–204 has biased composition (polar residues); it reads RWKNCTQTNTDTP. Disordered regions lie at residues 192–221, 272–379, and 421–440; these read RWKN…KTSE, AAPA…QRPK, and RHEH…FYQS. Positions 211–221 are enriched in basic and acidic residues; it reads EKCIEDSKTSE. The segment covering 272 to 293 has biased composition (low complexity); the sequence is AAPATEPAKPTHATRSSNQSRS. The segment covering 324–336 has biased composition (basic residues); the sequence is RHTHALRSPKTHR. The segment covering 352-362 has biased composition (pro residues); sequence APPPPSVPNQT. Residues 422–440 show a composition bias toward basic residues; that stretch reads HEHHHHHEHHHHYHHFYQS.

It belongs to the NKD family.

It is found in the cell membrane. Its subcellular location is the cytoplasm. In terms of biological role, cell autonomous antagonist of the canonical Wnt signaling pathway. May activate a second Wnt signaling pathway that controls planar cell polarity. This chain is Protein naked cuticle homolog 1 (nkd1), found in Danio rerio (Zebrafish).